Consider the following 193-residue polypeptide: Putative deoxynucleotide monophosphate kinase (193 aa).

Residue Lys10 coordinates dGMP. Positions 13 and 16 each coordinate ATP. Leu36, Lys37, Lys58, Asp122, Arg124, Glu128, and Ser155 together coordinate dGMP.

It belongs to the dNMP kinase family.

The enzyme catalyses a 2'-deoxyribonucleoside 5'-phosphate + ATP = a 2'-deoxyribonucleoside 5'-diphosphate + ADP. In Acanthamoeba polyphaga mimivirus (APMV), this protein is Putative deoxynucleotide monophosphate kinase.